Consider the following 208-residue polypeptide: Protein-L-isoaspartate O-methyltransferase (208 aa).

Serine 59 is a catalytic residue.

This sequence belongs to the methyltransferase superfamily. L-isoaspartyl/D-aspartyl protein methyltransferase family.

It is found in the cytoplasm. It catalyses the reaction [protein]-L-isoaspartate + S-adenosyl-L-methionine = [protein]-L-isoaspartate alpha-methyl ester + S-adenosyl-L-homocysteine. Functionally, catalyzes the methyl esterification of L-isoaspartyl residues in peptides and proteins that result from spontaneous decomposition of normal L-aspartyl and L-asparaginyl residues. It plays a role in the repair and/or degradation of damaged proteins. The polypeptide is Protein-L-isoaspartate O-methyltransferase (Sodalis glossinidius (strain morsitans)).